The sequence spans 148 residues: Transcription antitermination protein NusB (148 aa).

Belongs to the NusB family.

Functionally, involved in transcription antitermination. Required for transcription of ribosomal RNA (rRNA) genes. Binds specifically to the boxA antiterminator sequence of the ribosomal RNA (rrn) operons. This is Transcription antitermination protein NusB from Desulfitobacterium hafniense (strain DSM 10664 / DCB-2).